The following is a 21-amino-acid chain: Glucose-1-phosphate adenylyltransferase large subunit (21 aa).

Residues 1-21 (SVTADNASETKVREIGQEKSS) are disordered. Residues 8-21 (SETKVREIGQEKSS) show a composition bias toward basic and acidic residues.

Belongs to the bacterial/plant glucose-1-phosphate adenylyltransferase family. As to quaternary structure, heterotetramer.

The protein resides in the plastid. It is found in the chloroplast. It localises to the amyloplast. It catalyses the reaction alpha-D-glucose 1-phosphate + ATP + H(+) = ADP-alpha-D-glucose + diphosphate. The protein operates within glycan biosynthesis; starch biosynthesis. Its activity is regulated as follows. Activated by 3'phosphoglycerate, inhibited by orthophosphate. Allosteric regulation. Its function is as follows. This protein plays a role in synthesis of starch. It catalyzes the synthesis of the activated glycosyl donor, ADP-glucose from Glc-1-P and ATP. This is Glucose-1-phosphate adenylyltransferase large subunit from Spinacia oleracea (Spinach).